Reading from the N-terminus, the 232-residue chain is Sugar fermentation stimulation protein homolog (232 aa).

The protein belongs to the SfsA family.

This is Sugar fermentation stimulation protein homolog from Alkaliphilus metalliredigens (strain QYMF).